Consider the following 231-residue polypeptide: WAP four-disulfide core domain protein 3 (231 aa).

The first 24 residues, 1-24 (MMLSCLFLLKALLALGSLESWITA), serve as a signal peptide directing secretion. WAP domains lie at 26–68 (EHAK…CRDI), 69–114 (PKGR…VVPI), 119–162 (LAEF…LGDI), and 163–207 (EGGR…VPPV). 16 cysteine pairs are disulfide-bonded: cysteine 33–cysteine 57, cysteine 40–cysteine 61, cysteine 44–cysteine 56, cysteine 50–cysteine 65, cysteine 76–cysteine 102, cysteine 85–cysteine 106, cysteine 89–cysteine 101, cysteine 95–cysteine 110, cysteine 126–cysteine 150, cysteine 133–cysteine 154, cysteine 137–cysteine 149, cysteine 143–cysteine 158, cysteine 170–cysteine 195, cysteine 178–cysteine 199, cysteine 182–cysteine 194, and cysteine 188–cysteine 203. Asparagine 107 carries N-linked (GlcNAc...) asparagine glycosylation. Residue asparagine 217 is glycosylated (N-linked (GlcNAc...) asparagine).

In terms of tissue distribution, ubiquitously expressed.

Its subcellular location is the secreted. The chain is WAP four-disulfide core domain protein 3 (WFDC3) from Homo sapiens (Human).